The following is a 176-amino-acid chain: NAD(P)H-quinone oxidoreductase subunit 6, chloroplastic (176 aa).

5 helical membrane-spanning segments follow: residues 10-30, 33-53, 60-80, 92-112, and 152-172; these read ILVLFGGFVLLLGGLGVVLLT, TFSAFSLGLVLVCISLFYILL, VAQLLIYVGAINVLIIFAVMF, FWTIGDGFTSLVCITIPFSLM, and FYLPFELISIILLVSLIGAIT.

Belongs to the complex I subunit 6 family. In terms of assembly, NDH is composed of at least 16 different subunits, 5 of which are encoded in the nucleus.

The protein localises to the plastid. It is found in the chloroplast thylakoid membrane. It carries out the reaction a plastoquinone + NADH + (n+1) H(+)(in) = a plastoquinol + NAD(+) + n H(+)(out). The catalysed reaction is a plastoquinone + NADPH + (n+1) H(+)(in) = a plastoquinol + NADP(+) + n H(+)(out). Its function is as follows. NDH shuttles electrons from NAD(P)H:plastoquinone, via FMN and iron-sulfur (Fe-S) centers, to quinones in the photosynthetic chain and possibly in a chloroplast respiratory chain. The immediate electron acceptor for the enzyme in this species is believed to be plastoquinone. Couples the redox reaction to proton translocation, and thus conserves the redox energy in a proton gradient. In Oryza nivara (Indian wild rice), this protein is NAD(P)H-quinone oxidoreductase subunit 6, chloroplastic (ndhG).